We begin with the raw amino-acid sequence, 349 residues long: Thylakoid lumenal 29 kDa protein, chloroplastic (349 aa).

S155 is subject to Phosphoserine.

It belongs to the peroxidase family.

The protein resides in the plastid. Its subcellular location is the chloroplast thylakoid lumen. The polypeptide is Thylakoid lumenal 29 kDa protein, chloroplastic (TL29) (Arabidopsis thaliana (Mouse-ear cress)).